Consider the following 44-residue polypeptide: Protein PsbN (44 aa).

Residues 6–26 (FFFTIFVWFLLISVTGYSIYV) form a helical membrane-spanning segment.

It belongs to the PsbN family.

It is found in the plastid. The protein resides in the chloroplast thylakoid membrane. Its function is as follows. May play a role in photosystem I and II biogenesis. The sequence is that of Protein PsbN from Bigelowiella natans (Pedinomonas minutissima).